A 271-amino-acid chain; its full sequence is Aminoglycoside 3'-phosphotransferase (271 aa).

D198 acts as the Proton acceptor in catalysis.

The protein belongs to the aminoglycoside phosphotransferase family.

The catalysed reaction is kanamycin A + ATP = kanamycin 3'-phosphate + ADP + H(+). Functionally, resistance to kanamycin and structurally-related aminoglycosides, including amikacin. The chain is Aminoglycoside 3'-phosphotransferase (aphA) from Escherichia coli.